The following is a 364-amino-acid chain: 4-hydroxythreonine-4-phosphate dehydrogenase (364 aa).

The substrate site is built by H148 and T149. Positions 177, 216, and 301 each coordinate a divalent metal cation. K309, N318, and R327 together coordinate substrate.

Belongs to the PdxA family. As to quaternary structure, homodimer. The cofactor is Zn(2+). Mg(2+) serves as cofactor. It depends on Co(2+) as a cofactor.

It is found in the cytoplasm. It catalyses the reaction 4-(phosphooxy)-L-threonine + NAD(+) = 3-amino-2-oxopropyl phosphate + CO2 + NADH. It functions in the pathway cofactor biosynthesis; pyridoxine 5'-phosphate biosynthesis; pyridoxine 5'-phosphate from D-erythrose 4-phosphate: step 4/5. Catalyzes the NAD(P)-dependent oxidation of 4-(phosphooxy)-L-threonine (HTP) into 2-amino-3-oxo-4-(phosphooxy)butyric acid which spontaneously decarboxylates to form 3-amino-2-oxopropyl phosphate (AHAP). In Campylobacter jejuni subsp. jejuni serotype O:23/36 (strain 81-176), this protein is 4-hydroxythreonine-4-phosphate dehydrogenase.